The primary structure comprises 266 residues: Ribosome-recycling factor, chloroplastic (266 aa).

A compositionally biased stretch (low complexity) spans 1–26 (MPPLHAVSPAAAAAPPRALSSAARVP). The tract at residues 1–30 (MPPLHAVSPAAAAAPPRALSSAARVPQRPG) is disordered. The transit peptide at 1 to 74 (MPPLHAVSPA…SDKRAVLRHA (74 aa)) directs the protein to the chloroplast. Coiled-coil stretches lie at residues 75–109 (TIEE…NTVR) and 207–266 (VAIR…LMKI).

The protein belongs to the RRF family.

The protein localises to the plastid. Its subcellular location is the chloroplast. In terms of biological role, responsible for the release of ribosomes from messenger RNA at the termination of chloroplastic protein biosynthesis. This is Ribosome-recycling factor, chloroplastic from Oryza sativa subsp. indica (Rice).